The sequence spans 250 residues: MAVTKLVLVRHGESQWNNENRFTGWYDVDLSEKGRSEAKAAGQLLKDEGFAFDFAYTSVLKRAIHTLWSVLDELDQAWLPVEKSWKLNERHYGALQGLNKAETAEKYGDEQVKQWRRGFAITPPELTRDDERFPGHDPRYASLSDKELPQTESLALTIERVVPYWTETILPRIKSGERVIVAAHGNSLRALVKYLDNMGEDEILELNIPTGVPLVYEFDENFKPIKRYYLGNADEIAAKAAAVANQGKAK.

Substrate is bound by residues 10–17, 23–24, Arg-62, 89–92, Lys-100, 116–117, and 185–186; these read RHGESQWN, TG, ERHY, RR, and GN. His-11 serves as the catalytic Tele-phosphohistidine intermediate. Residue Glu-89 is the Proton donor/acceptor of the active site.

Belongs to the phosphoglycerate mutase family. BPG-dependent PGAM subfamily. Homodimer.

It catalyses the reaction (2R)-2-phosphoglycerate = (2R)-3-phosphoglycerate. It functions in the pathway carbohydrate degradation; glycolysis; pyruvate from D-glyceraldehyde 3-phosphate: step 3/5. Functionally, catalyzes the interconversion of 2-phosphoglycerate and 3-phosphoglycerate. In Pectobacterium atrosepticum (strain SCRI 1043 / ATCC BAA-672) (Erwinia carotovora subsp. atroseptica), this protein is 2,3-bisphosphoglycerate-dependent phosphoglycerate mutase.